Reading from the N-terminus, the 241-residue chain is 2,3,4,5-tetrahydropyridine-2,6-dicarboxylate N-acetyltransferase (241 aa).

Belongs to the transferase hexapeptide repeat family. DapH subfamily.

It carries out the reaction (S)-2,3,4,5-tetrahydrodipicolinate + acetyl-CoA + H2O = L-2-acetamido-6-oxoheptanedioate + CoA. It functions in the pathway amino-acid biosynthesis; L-lysine biosynthesis via DAP pathway; LL-2,6-diaminopimelate from (S)-tetrahydrodipicolinate (acetylase route): step 1/3. Catalyzes the transfer of an acetyl group from acetyl-CoA to tetrahydrodipicolinate. This chain is 2,3,4,5-tetrahydropyridine-2,6-dicarboxylate N-acetyltransferase, found in Thermoanaerobacter sp. (strain X514).